The sequence spans 270 residues: Formamidopyrimidine-DNA glycosylase (270 aa).

Proline 2 (schiff-base intermediate with DNA) is an active-site residue. The active-site Proton donor is the glutamate 3. Lysine 58 acts as the Proton donor; for beta-elimination activity in catalysis. The DNA site is built by histidine 91, arginine 110, and lysine 151. The segment at 236-270 (LVYGKAGAPCTECNTPLKEIRMNNRSTVYCPRCQR) adopts an FPG-type zinc-finger fold. Arginine 260 acts as the Proton donor; for delta-elimination activity in catalysis.

Belongs to the FPG family. In terms of assembly, monomer. Requires Zn(2+) as cofactor.

The catalysed reaction is Hydrolysis of DNA containing ring-opened 7-methylguanine residues, releasing 2,6-diamino-4-hydroxy-5-(N-methyl)formamidopyrimidine.. It carries out the reaction 2'-deoxyribonucleotide-(2'-deoxyribose 5'-phosphate)-2'-deoxyribonucleotide-DNA = a 3'-end 2'-deoxyribonucleotide-(2,3-dehydro-2,3-deoxyribose 5'-phosphate)-DNA + a 5'-end 5'-phospho-2'-deoxyribonucleoside-DNA + H(+). In terms of biological role, involved in base excision repair of DNA damaged by oxidation or by mutagenic agents. Acts as a DNA glycosylase that recognizes and removes damaged bases. Has a preference for oxidized purines, such as 7,8-dihydro-8-oxoguanine (8-oxoG). Has AP (apurinic/apyrimidinic) lyase activity and introduces nicks in the DNA strand. Cleaves the DNA backbone by beta-delta elimination to generate a single-strand break at the site of the removed base with both 3'- and 5'-phosphates. In Marinobacter nauticus (strain ATCC 700491 / DSM 11845 / VT8) (Marinobacter aquaeolei), this protein is Formamidopyrimidine-DNA glycosylase.